A 540-amino-acid polypeptide reads, in one-letter code: Chaperonin GroEL (540 aa).

Residues 29 to 32 (TLGP), 86 to 90 (DGTTT), Gly413, 476 to 478 (NAA), and Asp492 each bind ATP.

This sequence belongs to the chaperonin (HSP60) family. Forms a cylinder of 14 subunits composed of two heptameric rings stacked back-to-back. Interacts with the co-chaperonin GroES.

It is found in the cytoplasm. The catalysed reaction is ATP + H2O + a folded polypeptide = ADP + phosphate + an unfolded polypeptide.. Its function is as follows. Together with its co-chaperonin GroES, plays an essential role in assisting protein folding. The GroEL-GroES system forms a nano-cage that allows encapsulation of the non-native substrate proteins and provides a physical environment optimized to promote and accelerate protein folding. The sequence is that of Chaperonin GroEL from Streptococcus sanguinis.